The following is a 211-amino-acid chain: Imidazole glycerol phosphate synthase subunit HisH (211 aa).

The Glutamine amidotransferase type-1 domain occupies 3–211; the sequence is VIAVIDYDMG…VNQIRVKAIA (209 aa). The Nucleophile role is filled by cysteine 81. Catalysis depends on residues histidine 186 and glutamate 188.

Heterodimer of HisH and HisF.

Its subcellular location is the cytoplasm. It catalyses the reaction 5-[(5-phospho-1-deoxy-D-ribulos-1-ylimino)methylamino]-1-(5-phospho-beta-D-ribosyl)imidazole-4-carboxamide + L-glutamine = D-erythro-1-(imidazol-4-yl)glycerol 3-phosphate + 5-amino-1-(5-phospho-beta-D-ribosyl)imidazole-4-carboxamide + L-glutamate + H(+). It carries out the reaction L-glutamine + H2O = L-glutamate + NH4(+). It participates in amino-acid biosynthesis; L-histidine biosynthesis; L-histidine from 5-phospho-alpha-D-ribose 1-diphosphate: step 5/9. In terms of biological role, IGPS catalyzes the conversion of PRFAR and glutamine to IGP, AICAR and glutamate. The HisH subunit catalyzes the hydrolysis of glutamine to glutamate and ammonia as part of the synthesis of IGP and AICAR. The resulting ammonia molecule is channeled to the active site of HisF. The chain is Imidazole glycerol phosphate synthase subunit HisH from Gloeothece citriformis (strain PCC 7424) (Cyanothece sp. (strain PCC 7424)).